The sequence spans 266 residues: Zinc transporter ZupT (266 aa).

Transmembrane regions (helical) follow at residues 8–28 (LLLTLLAGLSTGIGSAMALAV), 36–56 (LALSLGFSAGIMLYVSFMEII), 71–91 (AGAWVSTISFFGGMLFTWAID), 123–143 (GIFTAAAIAIHNFPEGMAVFF), 152–172 (GIVIASTIALHNIPEGMAVAV), 185–205 (FSLSFLSGLAEPLGALVGYTL), 209–229 (FLTPFVLGIVLASVSGIMVYI), and 246–266 (LAITGLIAGMAVMALSLLLLT). 2 residues coordinate Fe(2+): asparagine 134 and glutamate 137. Positions 137 and 162 each coordinate Zn(2+). Positions 163, 166, and 195 each coordinate Fe(2+). Glutamate 166 serves as a coordination point for Zn(2+).

This sequence belongs to the ZIP transporter (TC 2.A.5) family. ZupT subfamily.

Its subcellular location is the cell inner membrane. It carries out the reaction Zn(2+)(in) = Zn(2+)(out). Functionally, mediates zinc uptake. May also transport other divalent cations. This is Zinc transporter ZupT from Chlorobium luteolum (strain DSM 273 / BCRC 81028 / 2530) (Pelodictyon luteolum).